The chain runs to 185 residues: Ribosome maturation factor RimP (185 aa).

The tract at residues 162 to 185 (VRLERAADGAPERGGDRGDTEESR) is disordered.

Belongs to the RimP family.

The protein localises to the cytoplasm. Required for maturation of 30S ribosomal subunits. In Saccharopolyspora erythraea (strain ATCC 11635 / DSM 40517 / JCM 4748 / NBRC 13426 / NCIMB 8594 / NRRL 2338), this protein is Ribosome maturation factor RimP.